Reading from the N-terminus, the 591-residue chain is Pentatricopeptide repeat-containing protein At3g47530 (591 aa).

9 PPR repeats span residues 76 to 110 (TLSH…SSLP), 112 to 146 (NPLS…GFLS), 147 to 177 (DSLL…IPKR), 178 to 208 (DTVS…MKND), 216 to 250 (DGVT…GLSG), 251 to 281 (ALNL…MRER), 282 to 316 (NVVS…GISP), 317 to 351 (EEQT…EFKI), and 354 to 384 (NLHH…MEMK). Residues 389-464 (IWRTLLGACR…KPGCSAIELQ (76 aa)) form a type E motif region. The segment at 465–495 (GTVHEFIVDDVSHPRKEEIYKMLAEINQQLK) is type E(+) motif. A type DYW motif region spans residues 496–591 (IAGYVAEITS…GGSCSCNDFW (96 aa)).

The protein belongs to the PPR family. PCMP-H subfamily.

The protein is Pentatricopeptide repeat-containing protein At3g47530 (PCMP-H76) of Arabidopsis thaliana (Mouse-ear cress).